The chain runs to 361 residues: tRNA(Ile)-lysidine synthase (361 aa).

An ATP-binding site is contributed by 32–37 (SGGPDS).

It belongs to the tRNA(Ile)-lysidine synthase family.

It localises to the cytoplasm. The enzyme catalyses cytidine(34) in tRNA(Ile2) + L-lysine + ATP = lysidine(34) in tRNA(Ile2) + AMP + diphosphate + H(+). Functionally, ligates lysine onto the cytidine present at position 34 of the AUA codon-specific tRNA(Ile) that contains the anticodon CAU, in an ATP-dependent manner. Cytidine is converted to lysidine, thus changing the amino acid specificity of the tRNA from methionine to isoleucine. The protein is tRNA(Ile)-lysidine synthase of Bradyrhizobium diazoefficiens (strain JCM 10833 / BCRC 13528 / IAM 13628 / NBRC 14792 / USDA 110).